Consider the following 188-residue polypeptide: dCTP deaminase (188 aa).

Residues 111–116 (KSTYAR), 135–137 (TLE), Gln-156, Tyr-170, and Gln-180 contribute to the dCTP site. Glu-137 acts as the Proton donor/acceptor in catalysis.

It belongs to the dCTP deaminase family. In terms of assembly, homotrimer.

The enzyme catalyses dCTP + H2O + H(+) = dUTP + NH4(+). It participates in pyrimidine metabolism; dUMP biosynthesis; dUMP from dCTP (dUTP route): step 1/2. Catalyzes the deamination of dCTP to dUTP. The polypeptide is dCTP deaminase (Francisella philomiragia subsp. philomiragia (strain ATCC 25017 / CCUG 19701 / FSC 153 / O#319-036)).